The primary structure comprises 254 residues: MNTIGVLKVSGHELDDPHFLAGLTGVIRTMTQPLVLVHGGGKEISAAVEQAGLPVEFVDGLRVTTPEVMAIMQMVVCGSINKRIVTALVNAGVRALGLSGLDIGLLRCEPYRPNGRDLGRVGVVTEVDGAALRHMLTLGWLPVIAPVALGSADGLSYNVNADMVAESIAGTLGTTELIFVSNVPGVLVDGQVVPRLTPAAVEDYIASGVISGGMIPKVRSALAALRRGATSVRIVNLAGLRDGGTRFVTEEAGS.

Substrate contacts are provided by residues 40-41 (GG), Arg62, and Asn158.

Belongs to the acetylglutamate kinase family. ArgB subfamily.

It localises to the cytoplasm. The catalysed reaction is N-acetyl-L-glutamate + ATP = N-acetyl-L-glutamyl 5-phosphate + ADP. The protein operates within amino-acid biosynthesis; L-arginine biosynthesis; N(2)-acetyl-L-ornithine from L-glutamate: step 2/4. Catalyzes the ATP-dependent phosphorylation of N-acetyl-L-glutamate. The chain is Acetylglutamate kinase from Chloroflexus aggregans (strain MD-66 / DSM 9485).